Reading from the N-terminus, the 6668-residue chain is Centrosome-associated protein CEP250 (6668 aa).

20 coiled-coil regions span residues 562-589, 632-666, 873-988, 1042-1087, 1252-1307, 1333-1427, 1501-1538, 1594-1688, 1896-1930, 1975-2224, 2298-3272, 3298-3436, 3526-3599, 3697-3773, 3856-4137, 4170-4486, 4515-5078, 5165-5202, 5298-5731, and 5927-6119; these read KAFH…LQQD, TREL…LRAS, HTEC…LRSS, LRMS…HEAA, VEDL…AVSR, LESL…LEKK, RPAA…LGTQ, REAL…SEVA, HDIL…TTEK, EETL…AKQS, AEDE…LKME, QQEL…SRAE, LVQL…AKEE, CASL…EERR, TEML…VEAE, RRKL…LRER, LETL…FRRR, LASL…QETL, LREK…QHRV, and TQAL…LWRQ.

Proteolytically cleaved; only the full-length form localizes to the inner core, while processed version also localizes to the outer core during the onset of cell division.

It is found in the cytoplasm. It localises to the cytoskeleton. The protein localises to the microtubule organizing center. Its subcellular location is the centrosome. Part of the centrosome inner core complex. Required for the linking of centrosomal inner and outer cores. In Toxoplasma gondii (strain ATCC 50611 / Me49), this protein is Centrosome-associated protein CEP250.